The following is a 216-amino-acid chain: Protein fmp32, mitochondrial (216 aa).

A coiled-coil region spans residues 111 to 133 (RQEMVALHSQVEQLFSDVERLKT). The chain crosses the membrane as a helical span at residues 193-215 (TLQWVFGIVTGSGALLLAYVRLI).

It belongs to the CCDC90 family.

It localises to the mitochondrion. Its subcellular location is the membrane. This Schizosaccharomyces pombe (strain 972 / ATCC 24843) (Fission yeast) protein is Protein fmp32, mitochondrial (fmp32).